We begin with the raw amino-acid sequence, 409 residues long: Short chain dehydrogenase sirS (409 aa).

Valine 49, leucine 68, lysine 195, valine 288, threonine 290, and alanine 299 together coordinate NADP(+). The disordered stretch occupies residues 306 to 332; the sequence is GVGPEGAGEEEGKGEAEGGAKGATGWS.

Belongs to the short-chain dehydrogenases/reductases (SDR) family. Highly divergent.

Its pathway is mycotoxin biosynthesis. In terms of biological role, short chain dehydrogenase; part of the gene cluster that mediates the biosynthesis of sirodesmin PL, an epipolythiodioxopiperazine (ETP) characterized by a disulfide bridged cyclic dipeptide and that acts as a phytotoxin which is involved in the blackleg didease of canola. SirD catalyzes the O-prenylation of L-tyrosine (L-Tyr) in the presence of dimethylallyl diphosphate (DMAPP) to yield 4-O-dimethylallyl-L-Tyr, and therefore represents probably the first pathway-specific enzyme in the biosynthesis of sirodesmin PL. 4-O-dimethylallyl-L-Tyr, then undergoes condensation with L-Ser in a reaction catalyzed by the non-ribosomal peptide synthase sirP to form the diketopiperazine (DKP) backbone. Further bishydroxylation of the DKP performed by the cytochrome P450 monooxygenase sirC leads to the production of the intermediate phomamide. This step is essential to form the reactive thiol group required for toxicity of sirodesmin PL. The next steps of sirodesmin biosynthesis are not well understood yet, but some predictions could be made from intermediate compounds identification. Phomamide is converted into phomalizarine via oxidation, probably by sirT. Further oxidation, methylation (by sirM or sirN) and reduction steps convert phomalizarine to deacetyl sirodesmin. Finally, acetyltransferase sirH probably acetylates deacetyl sirodesmin to produce sirodesmin PL. In Leptosphaeria maculans (Blackleg fungus), this protein is Short chain dehydrogenase sirS.